The chain runs to 72 residues: Brevinin-2GHb (72 aa).

An N-terminal signal peptide occupies residues 1–22 (MFTMKKSLLLLFFLGTVSLSLC). Residues 23–42 (EQERGADEDDGGEMTEELKR) constitute a propeptide that is removed on maturation. Residues cysteine 66 and cysteine 72 are joined by a disulfide bond.

In terms of tissue distribution, expressed by the skin glands.

Its subcellular location is the secreted. Functionally, antimicrobial peptide. Active against the Gram-positive bacteria S.aureus FDA209P (MIC=16.5 ug/ml) and B.subtilis ATCC 6633 (MIC&gt;64 ug/ml), and the Gram-negative bacteria E.coli O111 (MIC=8.2 ug/ml) and E.coli ATCC 25922 (MIC=8.2 ug/ml). Not active against the fungus C.albicans. This Sylvirana guentheri (Gunther's frog) protein is Brevinin-2GHb.